We begin with the raw amino-acid sequence, 209 residues long: J domain-containing protein spf31 (209 aa).

In terms of domain architecture, J spans 31-96 (NAYDVLDILP…KIRESLDSAY (66 aa)). Disordered stretches follow at residues 149-175 (ANQQ…EKVW) and 187-209 (QDFL…RVLG). Basic and acidic residues predominate over residues 154 to 175 (EQARQDEIARERKRRVESEKVW). Basic residues predominate over residues 192 to 209 (KTKKNNLKKKNKKPRVLG).

The protein is J domain-containing protein spf31 (spf31) of Schizosaccharomyces pombe (strain 972 / ATCC 24843) (Fission yeast).